Reading from the N-terminus, the 429-residue chain is Enolase (429 aa).

(2R)-2-phosphoglycerate is bound at residue Gln163. Catalysis depends on Glu205, which acts as the Proton donor. Mg(2+) contacts are provided by Asp242, Glu285, and Asp312. Lys337, Arg366, Ser367, and Lys388 together coordinate (2R)-2-phosphoglycerate. The active-site Proton acceptor is the Lys337.

This sequence belongs to the enolase family. The cofactor is Mg(2+).

It localises to the cytoplasm. It is found in the secreted. The protein resides in the cell surface. The catalysed reaction is (2R)-2-phosphoglycerate = phosphoenolpyruvate + H2O. It functions in the pathway carbohydrate degradation; glycolysis; pyruvate from D-glyceraldehyde 3-phosphate: step 4/5. Catalyzes the reversible conversion of 2-phosphoglycerate (2-PG) into phosphoenolpyruvate (PEP). It is essential for the degradation of carbohydrates via glycolysis. This chain is Enolase, found in Methylorubrum extorquens (strain CM4 / NCIMB 13688) (Methylobacterium extorquens).